The primary structure comprises 106 residues: SH3 domain-binding glutamic acid-rich-like protein 2-B (106 aa).

The SH3-binding signature appears at 61–67 (QGNPLPP).

It belongs to the SH3BGR family.

The protein resides in the nucleus. The chain is SH3 domain-binding glutamic acid-rich-like protein 2-B (sh3bgrl2-b) from Xenopus laevis (African clawed frog).